The primary structure comprises 334 residues: MKTLGEFIVEKQHDFSHATGELTALLSAIKLGAKIIHRDINKAGLVDILGTSGVSNVQGEVQMKLDLYANEKLKAALKARGEVAGIASEEEDEIVIFDGERAENAKYVVLMDPLDGSSNIDVNVSVGTIFSIYRRITPVGIPVTEEDFLQPGSAQVAAGYVVYGSSTMLVYTTGYGVHAFTYDPSLGVFCLSHEKVRFPATGNMYSINEGNYIKFPRGVKKYIKYCQEQDEATQRPYTSRYIGSLVADFHRNLLKGGIYIYPSTASHPQGKLRLLYECNPMAFLAEQAGGKASDGKNRILDITPVKLHQRAPFFVGTKSMVEDAERFIAENPDE.

Residues E89, D112, L114, and D115 each contribute to the Mg(2+) site. Residues 115-118 (DGSS), N208, Y241, and K271 each bind substrate. Mg(2+) is bound at residue E277.

Belongs to the FBPase class 1 family. Homotetramer. Mg(2+) is required as a cofactor.

It is found in the cytoplasm. The catalysed reaction is beta-D-fructose 1,6-bisphosphate + H2O = beta-D-fructose 6-phosphate + phosphate. It functions in the pathway carbohydrate biosynthesis; gluconeogenesis. This chain is Fructose-1,6-bisphosphatase class 1, found in Serratia proteamaculans (strain 568).